We begin with the raw amino-acid sequence, 218 residues long: Protein N-lysine methyltransferase METTL21A (218 aa).

S-adenosyl-L-methionine is bound by residues W47, 73–75 (GAG), D94, W125, and A143.

Belongs to the methyltransferase superfamily. METTL21 family. As to quaternary structure, interacts with heat shock 70 family members; at least some of these proteins are methylation substrates.

It is found in the cytoplasm. It carries out the reaction L-lysyl-[protein] + 3 S-adenosyl-L-methionine = N(6),N(6),N(6)-trimethyl-L-lysyl-[protein] + 3 S-adenosyl-L-homocysteine + 3 H(+). Protein-lysine methyltransferase that selectively trimethylates residues in heat shock protein 70 (HSP70) family members. Contributes to the in vivo trimethylation of Lys residues in HSPA1 and HSPA8. In vitro methylates 'Lys-561' in HSPA1, 'Lys-564' in HSPA2, 'Lys-585' in HSPA5, 'Lys-563' in HSPA6 and 'Lys-561' in HSPA8. The polypeptide is Protein N-lysine methyltransferase METTL21A (METTL21A) (Bos taurus (Bovine)).